We begin with the raw amino-acid sequence, 365 residues long: Chorismate synthase (365 aa).

Residues arginine 48 and arginine 54 each coordinate NADP(+). FMN is bound by residues arginine 131–serine 133, asparagine 243–alanine 244, glycine 288, lysine 303–serine 307, and arginine 329.

This sequence belongs to the chorismate synthase family. As to quaternary structure, homotetramer. Requires FMNH2 as cofactor.

The catalysed reaction is 5-O-(1-carboxyvinyl)-3-phosphoshikimate = chorismate + phosphate. It participates in metabolic intermediate biosynthesis; chorismate biosynthesis; chorismate from D-erythrose 4-phosphate and phosphoenolpyruvate: step 7/7. In terms of biological role, catalyzes the anti-1,4-elimination of the C-3 phosphate and the C-6 proR hydrogen from 5-enolpyruvylshikimate-3-phosphate (EPSP) to yield chorismate, which is the branch point compound that serves as the starting substrate for the three terminal pathways of aromatic amino acid biosynthesis. This reaction introduces a second double bond into the aromatic ring system. The sequence is that of Chorismate synthase from Rhizobium etli (strain CIAT 652).